Reading from the N-terminus, the 249-residue chain is Benzil reductase ((S)-benzoin forming) (249 aa).

Residues I6, N87, Y154, K158, V189, and T191 each contribute to the NADP(+) site. Y154 functions as the Proton acceptor in the catalytic mechanism.

Belongs to the short-chain dehydrogenases/reductases (SDR) family.

The protein localises to the cytoplasm. It carries out the reaction (S)-benzoin + NADP(+) = benzil + NADPH + H(+). It catalyses the reaction 2-hydroxy-1-phenyl-1-propanone + NADP(+) = 1-phenyl-1,2-propanedione + NADPH + H(+). With respect to regulation, inhibited by Cibacron blue 3GA, a general SDR family inhibitor. Reduces benzil stereospecifically to (S)-benzoin. Can also reduce 1-phenyl-1,2-propanedione, 1,4-naphthoquinone, 1-(4-methyl-phenyl)-2-phenyl-ethane-1,2-dione, 1-(4-fluoro-phenyl)-2-phenyl-ethane-1,2-dione, methyl benzoylformate and p-nitrobenzaldehyde in decreasing order. The sequence is that of Benzil reductase ((S)-benzoin forming) from Bacillus cereus.